A 329-amino-acid chain; its full sequence is Serpentine receptor class alpha-4 (329 aa).

Transmembrane regions (helical) follow at residues 25–45, 103–123, 144–164, 188–208, 238–258, and 273–293; these read IIVL…IKVV, LYLE…TGLL, GLAI…LIIW, YFQS…ILIW, ICFL…GFFI, and LVAV…ILIF.

It belongs to the nematode receptor-like protein sra family.

The protein localises to the membrane. The sequence is that of Serpentine receptor class alpha-4 (sra-4) from Caenorhabditis elegans.